The sequence spans 152 residues: Transcriptional repressor NrdR (152 aa).

The segment at 3–34 (CPACQHNGTRVLDSRPVDEGRSIRRRRECESC) is a zinc-finger region. The ATP-cone domain maps to 49 to 139 (LIVVKKEGIR…VYRQFKDINV (91 aa)).

This sequence belongs to the NrdR family. The cofactor is Zn(2+).

Negatively regulates transcription of bacterial ribonucleotide reductase nrd genes and operons by binding to NrdR-boxes. In Bacillus licheniformis (strain ATCC 14580 / DSM 13 / JCM 2505 / CCUG 7422 / NBRC 12200 / NCIMB 9375 / NCTC 10341 / NRRL NRS-1264 / Gibson 46), this protein is Transcriptional repressor NrdR.